A 170-amino-acid polypeptide reads, in one-letter code: Large ribosomal subunit protein uL11 (170 aa).

It belongs to the universal ribosomal protein uL11 family. In terms of assembly, part of the ribosomal stalk of the 50S ribosomal subunit. Interacts with L10 and the large rRNA to form the base of the stalk. L10 forms an elongated spine to which L12 dimers bind in a sequential fashion forming a multimeric L10(L12)X complex.

Forms part of the ribosomal stalk which helps the ribosome interact with GTP-bound translation factors. The sequence is that of Large ribosomal subunit protein uL11 from Saccharolobus solfataricus (strain ATCC 35092 / DSM 1617 / JCM 11322 / P2) (Sulfolobus solfataricus).